The chain runs to 598 residues: Elongation factor 4 (598 aa).

The region spanning 2 to 184 (NRIRNFSIIA…TIVAKLPPPK (183 aa)) is the tr-type G domain. Residues 14 to 19 (DHGKST) and 131 to 134 (NKID) contribute to the GTP site.

Belongs to the TRAFAC class translation factor GTPase superfamily. Classic translation factor GTPase family. LepA subfamily.

The protein resides in the cell inner membrane. The enzyme catalyses GTP + H2O = GDP + phosphate + H(+). In terms of biological role, required for accurate and efficient protein synthesis under certain stress conditions. May act as a fidelity factor of the translation reaction, by catalyzing a one-codon backward translocation of tRNAs on improperly translocated ribosomes. Back-translocation proceeds from a post-translocation (POST) complex to a pre-translocation (PRE) complex, thus giving elongation factor G a second chance to translocate the tRNAs correctly. Binds to ribosomes in a GTP-dependent manner. In Desulfosudis oleivorans (strain DSM 6200 / JCM 39069 / Hxd3) (Desulfococcus oleovorans), this protein is Elongation factor 4.